Reading from the N-terminus, the 91-residue chain is Acylphosphatase (91 aa).

Residues 3 to 91 (HIKVNVKGQV…TELTKFEVKY (89 aa)) form the Acylphosphatase-like domain. Active-site residues include Arg-18 and Asn-36.

Belongs to the acylphosphatase family.

It catalyses the reaction an acyl phosphate + H2O = a carboxylate + phosphate + H(+). This chain is Acylphosphatase (acyP), found in Oceanobacillus iheyensis (strain DSM 14371 / CIP 107618 / JCM 11309 / KCTC 3954 / HTE831).